The sequence spans 4008 residues: Extracellular matrix organizing protein FRAS1 (4008 aa).

An N-terminal signal peptide occupies residues 1–26; it reads MGVLKVWLGLALALAEFAVLPHHSEG. VWFC domains lie at 27 to 88, 93 to 153, 157 to 217, 219 to 279, and 283 to 343; these read ACVY…PECV, GSCH…PVCV, KPCS…PQCS, RSCS…EECV, and GSCS…PECI. At 27–3901 the chain is on the extracellular side; sequence ACVYQDSLLA…AASLSQTGAS (3875 aa). The residue at position 344 (serine 344) is a Phosphoserine. The VWFC 6 domain occupies 347–417; sequence GYCVYEETGE…VKGQCCPDCT (71 aa). Asparagine 361 carries an N-linked (GlcNAc...) asparagine glycan. 14 FU repeats span residues 409-460, 462-505, 507-553, 555-599, 602-647, 649-705, 708-753, 755-800, 803-852, 854-900, 903-948, 952-997, 999-1042, and 1046-1089; these read KGQC…GFYQ, GSLC…GFYQ, RHSC…GFYN, QGTC…GYYA, TGRC…GFYS, HGVC…HFYL, TGIC…GYFH, EGSC…EQFL, VGYC…GYYA, RGAC…GHYL, NHVC…QYYL, TNTC…SFYQ, SGLC…GYFA, and KHKC…GFSV. Asparagine 728 is a glycosylation site (N-linked (GlcNAc...) asparagine). Residues asparagine 1093 and asparagine 1108 are each glycosylated (N-linked (GlcNAc...) asparagine). 7 CSPG repeats span residues 1102 to 1197, 1217 to 1308, 1329 to 1438, 1463 to 1559, 1595 to 1689, 1710 to 1810, and 1833 to 1936; these read TPSL…LKIS, APYV…LQAN, GLQL…FEVS, APKV…FSFA, PVFQ…ISVT, GPRL…FSVS, and PPVI…FYVS. A glycan (N-linked (GlcNAc...) asparagine) is linked at asparagine 1504. Asparagine 1777 carries an N-linked (GlcNAc...) asparagine glycan. N-linked (GlcNAc...) asparagine glycans are attached at residues asparagine 1948 and asparagine 1978. 5 CSPG repeats span residues 1957-2057, 2078-2177, 2199-2291, 2311-2404, and 2439-2536; these read EPPR…FSLT, TPHL…FDVV, PPVI…FTLS, SLPV…FTVS, and TPRI…FLVK. Calx-beta domains lie at 2543–2646, 2659–2770, 2784–2890, 2905–3007, and 3025–3129; these read VSDN…VELS, AKVI…IALA, AKVL…VFLS, IAIN…VYLG, and ATIT…LVLG. Asparagine 2563, asparagine 2664, and asparagine 2682 each carry an N-linked (GlcNAc...) asparagine glycan. 6 N-linked (GlcNAc...) asparagine glycosylation sites follow: asparagine 2908, asparagine 2985, asparagine 3070, asparagine 3218, asparagine 3676, and asparagine 3875. Residues 3902 to 3922 traverse the membrane as a helical segment; it reads IGSALAAIMLLLLVFLVACFI. Residues 3923–4008 are Cytoplasmic-facing; sequence NRKCQKQRKK…HNNLQDGTEV (86 aa).

The protein belongs to the FRAS1 family. Expressed in many adult tissues, with highest levels in kidney, pancreas and thalamus. Relatively high expression was also detected in fetal kidney and heart.

Its subcellular location is the cell membrane. Functionally, involved in extracellular matrix organization. Required for the regulation of epidermal-basement membrane adhesion responsible for proper organogenesis during embryonic development. Involved in brain organization and function. The polypeptide is Extracellular matrix organizing protein FRAS1 (Homo sapiens (Human)).